A 176-amino-acid polypeptide reads, in one-letter code: Dual-action ribosomal maturation protein DarP (176 aa).

It belongs to the DarP family.

The protein localises to the cytoplasm. Member of a network of 50S ribosomal subunit biogenesis factors which assembles along the 30S-50S interface, preventing incorrect 23S rRNA structures from forming. Promotes peptidyl transferase center (PTC) maturation. This Haemophilus ducreyi (strain 35000HP / ATCC 700724) protein is Dual-action ribosomal maturation protein DarP.